The following is a 299-amino-acid chain: GTPase Era (299 aa).

The Era-type G domain maps to K2 to E170. The tract at residues G10 to S17 is G1. G10 to S17 provides a ligand contact to GTP. The G2 stretch occupies residues Q36–N40. Positions D57 to G60 are G3. GTP contacts are provided by residues D57–I61 and N119–D122. The G4 stretch occupies residues N119–D122. Residues T149–A151 are G5. In terms of domain architecture, KH type-2 spans T201–R278.

It belongs to the TRAFAC class TrmE-Era-EngA-EngB-Septin-like GTPase superfamily. Era GTPase family. Monomer.

The protein resides in the cytoplasm. Its subcellular location is the cell inner membrane. An essential GTPase that binds both GDP and GTP, with rapid nucleotide exchange. Plays a role in 16S rRNA processing and 30S ribosomal subunit biogenesis and possibly also in cell cycle regulation and energy metabolism. This chain is GTPase Era, found in Thermosipho melanesiensis (strain DSM 12029 / CIP 104789 / BI429).